A 42-amino-acid polypeptide reads, in one-letter code: Photosystem I reaction center subunit IX (42 aa).

Residues 7-27 (FLSSAPVLIMALLTFTAGILI) form a helical membrane-spanning segment.

This sequence belongs to the PsaJ family.

The protein localises to the cellular thylakoid membrane. May help in the organization of the PsaE and PsaF subunits. This chain is Photosystem I reaction center subunit IX, found in Microcystis aeruginosa (strain NIES-843 / IAM M-2473).